We begin with the raw amino-acid sequence, 344 residues long: rRNA 2'-O-methyltransferase fibrillarin (344 aa).

The disordered stretch occupies residues 1-113; it reads MGKPGFSPRG…GFKGGKTVTI (113 aa). Over residues 8 to 107 the composition is skewed to gly residues; the sequence is PRGGGGGGGG…RGGGAGGFKG (100 aa). Residues Arg9, Arg23, Arg25, Arg40, Arg42, Arg48, Arg51, Arg58, Arg63, Arg71, Arg77, Arg83, Arg88, Arg93, and Arg98 each carry the asymmetric dimethylarginine modification. S-adenosyl-L-methionine contacts are provided by residues 197–198, 216–217, 241–242, and 261–264; these read TT, EF, DA, and DVAQ.

The protein belongs to the methyltransferase superfamily. Fibrillarin family. As to quaternary structure, component of box C/D small nucleolar ribonucleoprotein (snoRNP) particles. It is associated with the U3, U8 and U13 small nuclear RNAs. By homology to other fibrillarins, some or all of the N-terminal domain arginines are modified to asymmetric dimethylarginine (DMA).

Its subcellular location is the nucleus. The protein resides in the nucleolus. It carries out the reaction L-glutaminyl-[histone H2A] + S-adenosyl-L-methionine = N(5)-methyl-L-glutaminyl-[histone H2A] + S-adenosyl-L-homocysteine + H(+). Its function is as follows. S-adenosyl-L-methionine-dependent methyltransferase that has the ability to methylate both RNAs and proteins. Involved in pre-rRNA processing. Utilizes the methyl donor S-adenosyl-L-methionine to catalyze the site-specific 2'-hydroxyl methylation of ribose moieties in pre-ribosomal RNA. Site specificity is provided by a guide RNA that base pairs with the substrate. Methylation occurs at a characteristic distance from the sequence involved in base pairing with the guide RNA. Also acts as a protein methyltransferase by mediating methylation of 'Gln-105' of histone H2A (H2AQ105me), a modification that impairs binding of the FACT complex and is specifically present at 35S ribosomal DNA locus. This is rRNA 2'-O-methyltransferase fibrillarin from Drosophila melanogaster (Fruit fly).